Reading from the N-terminus, the 2063-residue chain is Nuclear receptor coactivator 6 (2063 aa).

A TBP/GTF2A-binding region region spans residues 1-928 (MVLDDLPNLE…PPRKKKNSQQ (928 aa)). Residues 1–1057 (MVLDDLPNLE…LPVSQNVHPP (1057 aa)) are CREBBP-binding region. Positions 1 to 1310 (MVLDDLPNLE…QTHKLDSVVV (1310 aa)) are NCOA1-binding region. Arginine 95 is modified (asymmetric dimethylarginine). Disordered regions lie at residues 184-251 (IPPG…VNRQ), 281-549 (QQQQ…APQL), and 789-811 (RPPGPSPHMAQQHGDPATTANND). Over residues 281–300 (QQQQQLQARPPQQHQQQQPQ) the composition is skewed to low complexity. 5 stretches are compositionally biased toward polar residues: residues 353–368 (MQQQLQARPSLATVQT), 379–406 (GSQQASQAHTNFPQMSNPGQFTAPQMKS), 417–453 (PLQQPHLTNKSPASSPSSFQQGSPASSPTVNQTQQQM), 462–502 (PLPQ…QGPQ), and 522–549 (GQANPNFMQGQVPSTTATTPGNSGAPQL). Residues 773–927 (VNNSPSQVMG…KPPRKKKNSQ (155 aa)) form an NCOA6IP-binding region region. A Phosphoserine; by MAPK; in vitro modification is found at serine 884. Residues 887–891 (LVNLL) carry the LXXLL motif 1 motif. 3 disordered regions span residues 899–1278 (HFGV…LNPT), 1310–1353 (VNSG…KAPK), and 1448–1474 (EVKMVVPEDQSKKDGQPSDPNKLPSVE). Over residues 903–912 (NNKQNNTNAN) the composition is skewed to low complexity. Residues 913–925 (KPKKKKPPRKKKN) are compositionally biased toward basic residues. A compositionally biased stretch (low complexity) spans 982-992 (PLQQMPPQLMQ). Positions 995 to 1020 (APPPQPPQQQPQPQLPQQQQPPPPSQ) are enriched in pro residues. Residues 1021-1041 (PQSQQQQQQQQQMMMMLMMQQ) are compositionally biased toward low complexity. An asymmetric dimethylarginine mark is found at arginine 1047 and arginine 1058. Residues 1063–1075 (PDSQRMPMQQSGS) show a composition bias toward polar residues. Arginine 1096 carries the post-translational modification Asymmetric dimethylarginine. 3 stretches are compositionally biased toward polar residues: residues 1104–1125 (PLGSNSRKMVYQESPQNPSSSP), 1173–1191 (LSATQGATPQQPPVNSLPS), and 1202–1214 (APTQTSRPKTPNR). The segment covering 1219-1232 (PYYPQTPNNRPPST) has biased composition (pro residues). The span at 1310-1320 (VNSGKQSNSGA) shows a compositional bias: polar residues. Residues 1322 to 1345 (KRASPSNSRRSSPGSSRKTTPSPG) are compositionally biased toward low complexity. The short motif at 1491–1495 (LSQLL) is the LXXLL motif 2 element. Positions 1641 to 2063 (SEGQSAAQSN…AVQSKRRKSK (423 aa)) are EP300/CRSP3-binding region. Positions 1738-1820 (ATPVQLPSPP…VSSSKGKGKV (83 aa)) are disordered. A compositionally biased stretch (low complexity) spans 1750-1763 (SSPVVPSHPPVQQV). A compositionally biased stretch (polar residues) spans 1773 to 1798 (PQVNTSADQNTLPSSQSTTMVSPLLT). Residues 1799 to 1815 (NSPGSSGNRRSPVSSSK) show a composition bias toward low complexity. An N6-acetyllysine mark is found at lysine 1819 and lysine 1822. Disordered regions lie at residues 1837–1908 (GSLE…LPGG) and 1995–2063 (IVSG…RKSK). Basic and acidic residues predominate over residues 2002-2011 (EPKEIVEKSK). A Phosphoserine modification is found at serine 2018.

In terms of assembly, monomer and homodimer. Interacts with RBM39. Interacts in vitro with the basal transcription factors GTF2A and TBP, suggesting an autonomous transactivation function. Interacts with NCOA1, CRSP3, RBM14, the histone acetyltransferases EP300 and CREBBP, and with the methyltransferases NCOA6IP and PRMT2/HRMT1L1. Component of the MLL2/3 complex (also named ASCOM complex), at least composed of KMT2D/MLL2 or KMT2C/MLL3, ASH2L, RBBP5, WDR5, NCOA6, DPY30, KDM6A, PAXIP1/PTIP, PAGR1 and alpha- and beta-tubulin. Interacts with ZNF335; may enhance ligand-dependent transcriptional activation by nuclear hormone receptors. In terms of processing, phosphorylated by PRKDC. Phosphorylation on Ser-884 leads to a strong decrease in binding to ESR1 and ESR2. Ubiquitous. Highly expressed in brain, prostate, testis and ovary; weakly expressed in lung, thymus and small intestine.

It localises to the nucleus. Functionally, nuclear receptor coactivator that directly binds nuclear receptors and stimulates the transcriptional activities in a hormone-dependent fashion. Coactivates expression in an agonist- and AF2-dependent manner. Involved in the coactivation of different nuclear receptors, such as for steroids (GR and ERs), retinoids (RARs and RXRs), thyroid hormone (TRs), vitamin D3 (VDR) and prostanoids (PPARs). Probably functions as a general coactivator, rather than just a nuclear receptor coactivator. May also be involved in the coactivation of the NF-kappa-B pathway. May coactivate expression via a remodeling of chromatin and its interaction with histone acetyltransferase proteins. The polypeptide is Nuclear receptor coactivator 6 (NCOA6) (Homo sapiens (Human)).